Here is a 306-residue protein sequence, read N- to C-terminus: D-alanine--D-alanine ligase (306 aa).

The ATP-grasp domain occupies lysine 101 to arginine 301. ATP is bound at residue valine 129 to threonine 185. Mg(2+) contacts are provided by aspartate 256, glutamate 268, and asparagine 270.

This sequence belongs to the D-alanine--D-alanine ligase family. The cofactor is Mg(2+). It depends on Mn(2+) as a cofactor.

It localises to the cytoplasm. The enzyme catalyses 2 D-alanine + ATP = D-alanyl-D-alanine + ADP + phosphate + H(+). Its pathway is cell wall biogenesis; peptidoglycan biosynthesis. In terms of biological role, cell wall formation. The sequence is that of D-alanine--D-alanine ligase from Desulforudis audaxviator (strain MP104C).